Reading from the N-terminus, the 88-residue chain is Kunitz-type kappaPI-theraphotoxin-Hs1c (88 aa).

The signal sequence occupies residues 1 to 27 (MGIARILSAVLFLSVLFVVTFPALLSA). The propeptide occupies 28-33 (DHHDGR). A BPTI/Kunitz inhibitor domain is found at 37–85 (CRLPSDRGRCKASFECWYFNGRTCAKFIYGGCGGNGNKFPTQEACMKRC). Intrachain disulfides connect C37-C85, C46-C68, and C60-C81.

The protein belongs to the venom Kunitz-type family. 02 (native) subfamily. In terms of tissue distribution, expressed by the venom gland.

The protein resides in the secreted. Functionally, serine protease inhibitor that inhibits trypsin (Ki=0.281 nM), kallikrein (Ki=337 nM), and chymotrypsin. The protein is Kunitz-type kappaPI-theraphotoxin-Hs1c of Cyriopagopus schmidti (Chinese bird spider).